The following is a 216-amino-acid chain: Ion-translocating oxidoreductase complex subunit G (216 aa).

The helical transmembrane segment at 14–34 (ALVLGSFGFLAASFVSIIYVI) threads the bilayer. Thr181 carries the post-translational modification FMN phosphoryl threonine.

It belongs to the RnfG family. As to quaternary structure, the complex is composed of six subunits: RnfA, RnfB, RnfC, RnfD, RnfE and RnfG. It depends on FMN as a cofactor.

It is found in the cell inner membrane. Functionally, part of a membrane-bound complex that couples electron transfer with translocation of ions across the membrane. This Buchnera aphidicola subsp. Baizongia pistaciae (strain Bp) protein is Ion-translocating oxidoreductase complex subunit G.